A 297-amino-acid polypeptide reads, in one-letter code: Protoheme IX farnesyltransferase (297 aa).

9 helical membrane-spanning segments follow: residues 26–46 (VTQL…PGMV), 48–68 (YPVL…AFAV), 96–116 (LHII…LWNF), 120–140 (LTMW…TWLL), 147–167 (NIVI…AAVT), 174–194 (AWHL…ALAL), 218–238 (LLNI…PYIY), 245–265 (YLIS…ALFI), and 276–296 (FRFS…DHYF).

Belongs to the UbiA prenyltransferase family. Protoheme IX farnesyltransferase subfamily.

Its subcellular location is the cell inner membrane. It catalyses the reaction heme b + (2E,6E)-farnesyl diphosphate + H2O = Fe(II)-heme o + diphosphate. It participates in porphyrin-containing compound metabolism; heme O biosynthesis; heme O from protoheme: step 1/1. Its function is as follows. Converts heme B (protoheme IX) to heme O by substitution of the vinyl group on carbon 2 of heme B porphyrin ring with a hydroxyethyl farnesyl side group. This Polynucleobacter necessarius subsp. necessarius (strain STIR1) protein is Protoheme IX farnesyltransferase.